A 412-amino-acid chain; its full sequence is Imidazolonepropionase (412 aa).

The Fe(3+) site is built by His76 and His78. His76 and His78 together coordinate Zn(2+). Residues Arg85, Tyr148, and His181 each coordinate 4-imidazolone-5-propanoate. Residue Tyr148 participates in N-formimidoyl-L-glutamate binding. His242 contributes to the Fe(3+) binding site. His242 is a binding site for Zn(2+). Glu245 lines the 4-imidazolone-5-propanoate pocket. A Fe(3+)-binding site is contributed by Asp317. Asp317 is a Zn(2+) binding site. The N-formimidoyl-L-glutamate site is built by Asn319 and Gly321. Ser322 serves as a coordination point for 4-imidazolone-5-propanoate.

This sequence belongs to the metallo-dependent hydrolases superfamily. HutI family. Zn(2+) serves as cofactor. It depends on Fe(3+) as a cofactor.

It is found in the cytoplasm. It carries out the reaction 4-imidazolone-5-propanoate + H2O = N-formimidoyl-L-glutamate. It functions in the pathway amino-acid degradation; L-histidine degradation into L-glutamate; N-formimidoyl-L-glutamate from L-histidine: step 3/3. In terms of biological role, catalyzes the hydrolytic cleavage of the carbon-nitrogen bond in imidazolone-5-propanoate to yield N-formimidoyl-L-glutamate. It is the third step in the universal histidine degradation pathway. This is Imidazolonepropionase from Staphylococcus aureus (strain Mu50 / ATCC 700699).